The chain runs to 417 residues: Gamma-glutamyl phosphate reductase (417 aa).

It belongs to the gamma-glutamyl phosphate reductase family.

Its subcellular location is the cytoplasm. It carries out the reaction L-glutamate 5-semialdehyde + phosphate + NADP(+) = L-glutamyl 5-phosphate + NADPH + H(+). It functions in the pathway amino-acid biosynthesis; L-proline biosynthesis; L-glutamate 5-semialdehyde from L-glutamate: step 2/2. In terms of biological role, catalyzes the NADPH-dependent reduction of L-glutamate 5-phosphate into L-glutamate 5-semialdehyde and phosphate. The product spontaneously undergoes cyclization to form 1-pyrroline-5-carboxylate. This Phocaeicola vulgatus (strain ATCC 8482 / DSM 1447 / JCM 5826 / CCUG 4940 / NBRC 14291 / NCTC 11154) (Bacteroides vulgatus) protein is Gamma-glutamyl phosphate reductase.